Reading from the N-terminus, the 203-residue chain is Pyrrolidone-carboxylate peptidase 1 (203 aa).

Active-site residues include glutamate 78, cysteine 141, and histidine 165.

Belongs to the peptidase C15 family. In terms of assembly, homotetramer.

The protein localises to the cytoplasm. The catalysed reaction is Release of an N-terminal pyroglutamyl group from a polypeptide, the second amino acid generally not being Pro.. Its function is as follows. Removes 5-oxoproline from various penultimate amino acid residues except L-proline. This Caldanaerobacter subterraneus subsp. tengcongensis (strain DSM 15242 / JCM 11007 / NBRC 100824 / MB4) (Thermoanaerobacter tengcongensis) protein is Pyrrolidone-carboxylate peptidase 1.